Reading from the N-terminus, the 447-residue chain is Innexin-5 (447 aa).

Helical transmembrane passes span 30–47, 108–128, 198–218, and 283–303; these read TSTLLGFSAIMMAASQYV, QWIPIVLVLQAFLFYLPSIIW, ALYLLVKILYLANIVLQFWIL, and VYVFFWFWLLFVGLLTVCSLA. A disordered region spans residues 389–447; the sequence is KKDDDSALPASAPVDLQEDDDDDTPFPPPTKAVAETLTSDDEEEETDVDSPDTTATLPR. Acidic residues predominate over residues 426 to 438; the sequence is TSDDEEEETDVDS.

This sequence belongs to the pannexin family.

Its subcellular location is the cell membrane. The protein resides in the cell junction. It is found in the gap junction. Functionally, structural component of the gap junctions. The chain is Innexin-5 (inx-5) from Caenorhabditis elegans.